Reading from the N-terminus, the 152-residue chain is MTITDLVLILFIAALLVYALYDQFIMPRRNGPTLLSIALLRRGRVDSVIFVGLVAILIYNNVTSHGAQMTTWLLSALALMGFYIFWIRTPRIIFKQRGFFFANVWIEYNRIKEMNLSEDGVLVMQLEQRRLLIRVHNIDDLEKIYKLLIENQ.

A run of 3 helical transmembrane segments spans residues 6–26 (LVLILFIAALLVYALYDQFIM), 45–65 (VDSVIFVGLVAILIYNNVTSH), and 67–87 (AQMTTWLLSALALMGFYIFWI).

This sequence belongs to the UPF0266 family.

Its subcellular location is the cell inner membrane. This chain is UPF0266 membrane protein YobD, found in Salmonella paratyphi A (strain ATCC 9150 / SARB42).